The chain runs to 191 residues: Thymidylate kinase (191 aa).

An ATP-binding site is contributed by 7 to 14 (GIDGVGKS).

It belongs to the thymidylate kinase family.

It catalyses the reaction dTMP + ATP = dTDP + ADP. Functionally, phosphorylation of dTMP to form dTDP in both de novo and salvage pathways of dTTP synthesis. The chain is Thymidylate kinase from Helicobacter acinonychis (strain Sheeba).